Consider the following 170-residue polypeptide: Large ribosomal subunit protein uL5 (170 aa).

It belongs to the universal ribosomal protein uL5 family. Part of the 50S ribosomal subunit; contacts the 5S rRNA and probably tRNA. Forms a bridge to the 30S subunit in the 70S ribosome.

This is one of the proteins that bind and probably mediate the attachment of the 5S RNA into the large ribosomal subunit, where it forms part of the central protuberance. In the 70S ribosome it contacts protein S13 of the 30S subunit (bridge B1b), connecting the 2 subunits; this bridge is implicated in subunit movement. May contact the P site tRNA; the 5S rRNA and some of its associated proteins might help stabilize positioning of ribosome-bound tRNAs. This chain is Large ribosomal subunit protein uL5, found in Thermoplasma volcanium (strain ATCC 51530 / DSM 4299 / JCM 9571 / NBRC 15438 / GSS1).